Reading from the N-terminus, the 557-residue chain is Isocitrate lyase (557 aa).

Thr53 is modified (phosphothreonine). Position 106–108 (106–108) interacts with substrate; the sequence is SGW. Position 179 (Asp179) interacts with Mg(2+). Catalysis depends on Cys217, which acts as the Proton acceptor. Substrate is bound by residues 218–219, Arg254, 437–441, and Thr471; these read GH and NLSPS.

It belongs to the isocitrate lyase/PEP mutase superfamily. Isocitrate lyase family. In terms of assembly, homotetramer. It depends on Mg(2+) as a cofactor. Phosphorylated in response to elevated glucose levels, leading first to reversible inactivation of the enzyme (short-term inactivation), and at a later stage to proteolytic degradation of the protein (long-term inactivation).

Its subcellular location is the cytoplasm. The protein localises to the secreted. The protein resides in the extracellular space. It is found in the extracellular matrix. It localises to the vacuole. It carries out the reaction D-threo-isocitrate = glyoxylate + succinate. The enzyme catalyses (2S,3R)-3-hydroxybutane-1,2,3-tricarboxylate = pyruvate + succinate. It participates in carbohydrate metabolism; glyoxylate cycle; (S)-malate from isocitrate: step 1/2. Its activity is regulated as follows. Phosphorylated and inactivated after addition of glucose to the cell culture (repressing conditions). Its function is as follows. Catalyzes the formation of succinate and glyoxylate from isocitrate, a key step of the glyoxylate cycle, which operates as an anaplerotic route for replenishing the tricarboxylic acid cycle. Required for growth on ethanol or acetate, but dispensable when fermentable carbon sources are available. Also acts on 2-methylisocitrate. In Saccharomyces cerevisiae (strain ATCC 204508 / S288c) (Baker's yeast), this protein is Isocitrate lyase.